The sequence spans 79 residues: Large ribosomal subunit protein bL28 (79 aa).

This sequence belongs to the bacterial ribosomal protein bL28 family.

The chain is Large ribosomal subunit protein bL28 from Porphyromonas gingivalis (strain ATCC 33277 / DSM 20709 / CIP 103683 / JCM 12257 / NCTC 11834 / 2561).